A 396-amino-acid polypeptide reads, in one-letter code: Lipopolysaccharide assembly protein B (396 aa).

The chain crosses the membrane as a helical span at residues 1 to 20 (MIELLFLLLPIAAAYGWYMG). Over 21–396 (RRSAKKDQDD…IKPVSNQEHN (376 aa)) the chain is Cytoplasmic. 4 TPR repeats span residues 35–68 (LSRD…QEIE), 77–109 (FEAE…SPNY), 149–182 (ENAL…KPQE), and 221–254 (VRAS…NPDY). C364, C367, C378, and C381 together coordinate Fe cation.

Belongs to the LapB family.

The protein localises to the cell inner membrane. Functionally, modulates cellular lipopolysaccharide (LPS) levels by regulating LpxC, which is involved in lipid A biosynthesis. May act by modulating the proteolytic activity of FtsH towards LpxC. May also coordinate assembly of proteins involved in LPS synthesis at the plasma membrane. This is Lipopolysaccharide assembly protein B from Haemophilus influenzae (strain ATCC 51907 / DSM 11121 / KW20 / Rd).